A 278-amino-acid chain; its full sequence is MEACPHIRYAFQNDKLLLQQASVGRLTLVNKTTILLRPMKTTTVDLGLYARPPEGHGLMLWGSTSRPVTSHVGIIDPGYTGELRLILQNQRRYNSTLRPSELKIHLAAFRYATPQMEEDKGPINHPQYPGDVGLDVSLPKDLALFPHQTVSVTLTVPPPSIPHHRPTIFGRSGLAMQGILVKPCRWRRGGVDVSLTNFSDQTVFLNKYRRFCQLVYLHKHHLTSFYSPHSDAGVLGPRSLFRWASCAFEEVPGLAMGDSGLSEALEGRQGRGFGSSGQ.

Residues 171 to 173 and 273 to 274 each bind substrate; these read RSG and FG.

This sequence belongs to the dUTPase family. Mg(2+) serves as cofactor.

It catalyses the reaction dUTP + H2O = dUMP + diphosphate + H(+). Involved in nucleotide metabolism: produces dUMP, the immediate precursor of thymidine nucleotides and decreases the intracellular concentration of dUTP to avoid uracil incorporation into viral DNA. This chain is Deoxyuridine 5'-triphosphate nucleotidohydrolase, found in Homo sapiens (Human).